The following is a 474-amino-acid chain: Probable cytosol aminopeptidase (474 aa).

Mn(2+) is bound by residues lysine 237 and aspartate 242. The active site involves lysine 249. Mn(2+) contacts are provided by aspartate 260, aspartate 319, and glutamate 321. Arginine 323 is an active-site residue.

It belongs to the peptidase M17 family. Mn(2+) is required as a cofactor.

The protein resides in the cytoplasm. The enzyme catalyses Release of an N-terminal amino acid, Xaa-|-Yaa-, in which Xaa is preferably Leu, but may be other amino acids including Pro although not Arg or Lys, and Yaa may be Pro. Amino acid amides and methyl esters are also readily hydrolyzed, but rates on arylamides are exceedingly low.. It catalyses the reaction Release of an N-terminal amino acid, preferentially leucine, but not glutamic or aspartic acids.. In terms of biological role, presumably involved in the processing and regular turnover of intracellular proteins. Catalyzes the removal of unsubstituted N-terminal amino acids from various peptides. The protein is Probable cytosol aminopeptidase of Helicobacter hepaticus (strain ATCC 51449 / 3B1).